A 265-amino-acid polypeptide reads, in one-letter code: Tryptophan synthase alpha chain (265 aa).

Active-site proton acceptor residues include Glu-49 and Asp-60.

This sequence belongs to the TrpA family. In terms of assembly, tetramer of two alpha and two beta chains.

The enzyme catalyses (1S,2R)-1-C-(indol-3-yl)glycerol 3-phosphate + L-serine = D-glyceraldehyde 3-phosphate + L-tryptophan + H2O. It functions in the pathway amino-acid biosynthesis; L-tryptophan biosynthesis; L-tryptophan from chorismate: step 5/5. Functionally, the alpha subunit is responsible for the aldol cleavage of indoleglycerol phosphate to indole and glyceraldehyde 3-phosphate. The protein is Tryptophan synthase alpha chain of Paracoccus denitrificans (strain Pd 1222).